A 496-amino-acid polypeptide reads, in one-letter code: Apolipoprotein N-acyltransferase (496 aa).

The next 6 membrane-spanning stretches (helical) occupy residues Ile6 to Pro26, Phe50 to Val70, Phe77 to Ser97, Leu114 to Leu134, Ile148 to Ile168, and Leu183 to Val203. Residues Val220–Thr464 form the CN hydrolase domain. Glu259 acts as the Proton acceptor in catalysis. Residue Lys322 is part of the active site. Cys372 (nucleophile) is an active-site residue. Residues Phe474 to Phe494 form a helical membrane-spanning segment.

The protein belongs to the CN hydrolase family. Apolipoprotein N-acyltransferase subfamily.

It is found in the cell inner membrane. The enzyme catalyses N-terminal S-1,2-diacyl-sn-glyceryl-L-cysteinyl-[lipoprotein] + a glycerophospholipid = N-acyl-S-1,2-diacyl-sn-glyceryl-L-cysteinyl-[lipoprotein] + a 2-acyl-sn-glycero-3-phospholipid + H(+). Its pathway is protein modification; lipoprotein biosynthesis (N-acyl transfer). Functionally, catalyzes the phospholipid dependent N-acylation of the N-terminal cysteine of apolipoprotein, the last step in lipoprotein maturation. This is Apolipoprotein N-acyltransferase from Rickettsia prowazekii (strain Madrid E).